The sequence spans 360 residues: Chorismate synthase (360 aa).

NADP(+)-binding residues include R48 and R54. FMN is bound by residues 125-127 (RSS), 246-247 (NA), G286, 301-305 (KPTSS), and R327.

This sequence belongs to the chorismate synthase family. As to quaternary structure, homotetramer. FMNH2 serves as cofactor.

The enzyme catalyses 5-O-(1-carboxyvinyl)-3-phosphoshikimate = chorismate + phosphate. It functions in the pathway metabolic intermediate biosynthesis; chorismate biosynthesis; chorismate from D-erythrose 4-phosphate and phosphoenolpyruvate: step 7/7. In terms of biological role, catalyzes the anti-1,4-elimination of the C-3 phosphate and the C-6 proR hydrogen from 5-enolpyruvylshikimate-3-phosphate (EPSP) to yield chorismate, which is the branch point compound that serves as the starting substrate for the three terminal pathways of aromatic amino acid biosynthesis. This reaction introduces a second double bond into the aromatic ring system. The sequence is that of Chorismate synthase from Haemophilus ducreyi (strain 35000HP / ATCC 700724).